The following is a 724-amino-acid chain: Methionine--tRNA ligase (724 aa).

The 'HIGH' region motif lies at 12 to 22 (PYVNNIPHLGN). Residues Cys143, Cys146, Cys155, and Cys158 each contribute to the Zn(2+) site. Residues 330-334 (KFSKS) carry the 'KMSKS' region motif. Residue Lys333 coordinates ATP. One can recognise a tRNA-binding domain in the interval 560–665 (FREKVLLKVV…KNPIPGERII (106 aa)).

This sequence belongs to the class-I aminoacyl-tRNA synthetase family. MetG type 1 subfamily. Homodimer. Requires Zn(2+) as cofactor.

It localises to the cytoplasm. It catalyses the reaction tRNA(Met) + L-methionine + ATP = L-methionyl-tRNA(Met) + AMP + diphosphate. Functionally, is required not only for elongation of protein synthesis but also for the initiation of all mRNA translation through initiator tRNA(fMet) aminoacylation. In Borrelia garinii subsp. bavariensis (strain ATCC BAA-2496 / DSM 23469 / PBi) (Borreliella bavariensis), this protein is Methionine--tRNA ligase.